Here is a 228-residue protein sequence, read N- to C-terminus: 5'-methylthioadenosine/S-adenosylhomocysteine nucleosidase (228 aa).

Residue Glu-11 is the Proton acceptor of the active site. Substrate contacts are provided by residues Gly-77, Ile-151, and 172 to 173 (ME). Asp-196 functions as the Proton donor in the catalytic mechanism.

Belongs to the PNP/UDP phosphorylase family. MtnN subfamily.

The catalysed reaction is S-adenosyl-L-homocysteine + H2O = S-(5-deoxy-D-ribos-5-yl)-L-homocysteine + adenine. It carries out the reaction S-methyl-5'-thioadenosine + H2O = 5-(methylsulfanyl)-D-ribose + adenine. The enzyme catalyses 5'-deoxyadenosine + H2O = 5-deoxy-D-ribose + adenine. The protein operates within amino-acid biosynthesis; L-methionine biosynthesis via salvage pathway; S-methyl-5-thio-alpha-D-ribose 1-phosphate from S-methyl-5'-thioadenosine (hydrolase route): step 1/2. Functionally, catalyzes the irreversible cleavage of the glycosidic bond in both 5'-methylthioadenosine (MTA) and S-adenosylhomocysteine (SAH/AdoHcy) to adenine and the corresponding thioribose, 5'-methylthioribose and S-ribosylhomocysteine, respectively. Also cleaves 5'-deoxyadenosine, a toxic by-product of radical S-adenosylmethionine (SAM) enzymes, into 5-deoxyribose and adenine. This chain is 5'-methylthioadenosine/S-adenosylhomocysteine nucleosidase, found in Staphylococcus aureus (strain MRSA252).